The sequence spans 148 residues: UPF0591 membrane protein C15E1.02c (148 aa).

The next 3 helical transmembrane spans lie at 14–34 (AILL…GPLM), 80–102 (LLQL…VFGA), and 122–142 (ILVK…ALIG).

Belongs to the UPF0591 family.

Its subcellular location is the membrane. This Schizosaccharomyces pombe (strain 972 / ATCC 24843) (Fission yeast) protein is UPF0591 membrane protein C15E1.02c.